The sequence spans 186 residues: uncharacterized protein (186 aa).

2 CBS domains span residues 10-69 and 77-133; these read IMKK…KLPP and ISSG…IIST.

This is an uncharacterized protein from Methanocaldococcus jannaschii (strain ATCC 43067 / DSM 2661 / JAL-1 / JCM 10045 / NBRC 100440) (Methanococcus jannaschii).